Consider the following 107-residue polypeptide: Large ribosomal subunit protein uL24 (107 aa).

The protein belongs to the universal ribosomal protein uL24 family. In terms of assembly, part of the 50S ribosomal subunit.

Functionally, one of two assembly initiator proteins, it binds directly to the 5'-end of the 23S rRNA, where it nucleates assembly of the 50S subunit. One of the proteins that surrounds the polypeptide exit tunnel on the outside of the subunit. The chain is Large ribosomal subunit protein uL24 from Gluconacetobacter diazotrophicus (strain ATCC 49037 / DSM 5601 / CCUG 37298 / CIP 103539 / LMG 7603 / PAl5).